A 109-amino-acid chain; its full sequence is Peptide chaperone MftB (109 aa).

Belongs to the peptide chaperone MftB family.

Peptide chaperone involved in the biosynthesis of the enzyme cofactor mycofactocin (MFT). Binds MftA and MftC with high affinity, and is essential for MftC activity on MftA, likely via the formation of a ternary complex. The polypeptide is Peptide chaperone MftB (Mycobacterium tuberculosis (strain ATCC 25618 / H37Rv)).